The sequence spans 151 residues: 3-hydroxyacyl-[acyl-carrier-protein] dehydratase FabZ (151 aa).

Residue His-56 is part of the active site.

Belongs to the thioester dehydratase family. FabZ subfamily.

The protein localises to the cytoplasm. It carries out the reaction a (3R)-hydroxyacyl-[ACP] = a (2E)-enoyl-[ACP] + H2O. In terms of biological role, involved in unsaturated fatty acids biosynthesis. Catalyzes the dehydration of short chain beta-hydroxyacyl-ACPs and long chain saturated and unsaturated beta-hydroxyacyl-ACPs. The polypeptide is 3-hydroxyacyl-[acyl-carrier-protein] dehydratase FabZ (Rhodopseudomonas palustris (strain BisB18)).